The chain runs to 388 residues: Flap endonuclease 1 (388 aa).

The N-domain stretch occupies residues 1–105 (MGIKNLTSLI…GELAKRYARR (105 aa)). Aspartate 34 contacts Mg(2+). Arginine 71 serves as a coordination point for DNA. Mg(2+) is bound by residues aspartate 87, glutamate 159, glutamate 161, aspartate 180, and aspartate 182. The I-domain stretch occupies residues 123 to 254 (DVQKFQKRTI…KKSFDMITKH (132 aa)). Glutamate 159 contacts DNA. DNA contacts are provided by glycine 232 and aspartate 234. Residue aspartate 234 participates in Mg(2+) binding. Residues 338–346 (VQTRIDTFF) are interaction with PCNA. A disordered region spans residues 349–388 (IKRPRDEDAGSAKKKQKTVAKPGAAGSKKKPAAKKAAGKK). Positions 375–388 (SKKKPAAKKAAGKK) are enriched in basic residues.

This sequence belongs to the XPG/RAD2 endonuclease family. FEN1 subfamily. Interacts with PCNA. Three molecules of repG bind to one PCNA trimer with each molecule binding to one PCNA monomer. PCNA stimulates the nuclease activity without altering cleavage specificity. Requires Mg(2+) as cofactor. Phosphorylated. Phosphorylation upon DNA damage induces relocalization to the nuclear plasma.

It localises to the nucleus. Its subcellular location is the nucleolus. The protein resides in the nucleoplasm. It is found in the mitochondrion. Its function is as follows. Structure-specific nuclease with 5'-flap endonuclease and 5'-3' exonuclease activities involved in DNA replication and repair. During DNA replication, cleaves the 5'-overhanging flap structure that is generated by displacement synthesis when DNA polymerase encounters the 5'-end of a downstream Okazaki fragment. It enters the flap from the 5'-end and then tracks to cleave the flap base, leaving a nick for ligation. Also involved in the long patch base excision repair (LP-BER) pathway, by cleaving within the apurinic/apyrimidinic (AP) site-terminated flap. Acts as a genome stabilization factor that prevents flaps from equilibrating into structures that lead to duplications and deletions. Also possesses 5'-3' exonuclease activity on nicked or gapped double-stranded DNA, and exhibits RNase H activity. Also involved in replication and repair of rDNA and in repairing mitochondrial DNA. The polypeptide is Flap endonuclease 1 (Heterostelium pallidum (strain ATCC 26659 / Pp 5 / PN500) (Cellular slime mold)).